A 465-amino-acid chain; its full sequence is Neuraminidase (465 aa).

At 1-11 the chain is on the intravirion side; sequence MLPSTIQTLTL. The helical transmembrane segment at 12 to 34 threads the bilayer; it reads FLTSGGVLLSLYVSASLSYLLYS. Residues 13 to 35 are involved in apical transport and lipid raft association; the sequence is LTSGGVLLSLYVSASLSYLLYSD. Residues 35–465 are Virion surface-facing; it reads DILLRFSSKI…DTVTGVDMAL (431 aa). The interval 38–85 is hypervariable stalk region; it reads LRFSSKITAPTMTLDCANASNVQAVNRSATKEMTFLLPEPEWTYPRLS. N-linked (GlcNAc...) asparagine; by host glycans are attached at residues Asn55 and Asn63. Disulfide bonds link Cys86–Cys419, Cys121–Cys126, Cys181–Cys228, Cys230–Cys235, Cys276–Cys290, Cys278–Cys288, Cys317–Cys336, and Cys423–Cys446. Positions 88 to 465 are head of neuraminidase; that stretch reads GSTFQKALLI…DTVTGVDMAL (378 aa). Arg115 is a binding site for substrate. An N-linked (GlcNAc...) asparagine; by host glycan is attached at Asn143. Asp148 acts as the Proton donor/acceptor in catalysis. Arg149 provides a ligand contact to substrate. 274–275 is a substrate binding site; that stretch reads EE. N-linked (GlcNAc...) asparagine; by host glycosylation is present at Asn283. Position 291 (Arg291) interacts with substrate. 2 residues coordinate Ca(2+): Asp292 and Asp323. A disordered region spans residues 328-347; it reads DDGSITGPCESDGDKGRGGI. Substrate is bound at residue Arg373. Tyr408 serves as the catalytic Nucleophile.

It belongs to the glycosyl hydrolase 34 family. Homotetramer. The cofactor is Ca(2+). N-glycosylated.

The protein localises to the virion membrane. Its subcellular location is the host apical cell membrane. The catalysed reaction is Hydrolysis of alpha-(2-&gt;3)-, alpha-(2-&gt;6)-, alpha-(2-&gt;8)- glycosidic linkages of terminal sialic acid residues in oligosaccharides, glycoproteins, glycolipids, colominic acid and synthetic substrates.. With respect to regulation, inhibited by the neuraminidase inhibitors zanamivir (Relenza) and oseltamivir (Tamiflu). These drugs interfere with the release of progeny virus from infected cells and are effective against all influenza strains. Resistance to neuraminidase inhibitors is quite rare. Functionally, catalyzes the removal of terminal sialic acid residues from viral and cellular glycoconjugates. Cleaves off the terminal sialic acids on the glycosylated HA during virus budding to facilitate virus release. Additionally helps virus spread through the circulation by further removing sialic acids from the cell surface. These cleavages prevent self-aggregation and ensure the efficient spread of the progeny virus from cell to cell. Otherwise, infection would be limited to one round of replication. Described as a receptor-destroying enzyme because it cleaves a terminal sialic acid from the cellular receptors. May facilitate viral invasion of the upper airways by cleaving the sialic acid moieties on the mucin of the airway epithelial cells. Likely to plays a role in the budding process through its association with lipid rafts during intracellular transport. May additionally display a raft-association independent effect on budding. Plays a role in the determination of host range restriction on replication and virulence. Sialidase activity in late endosome/lysosome traffic seems to enhance virus replication. The protein is Neuraminidase of Influenza B virus (strain B/Memphis/3/1989).